The following is a 119-amino-acid chain: UPF0102 protein Pmen_0910 (119 aa).

The protein belongs to the UPF0102 family.

The protein is UPF0102 protein Pmen_0910 of Ectopseudomonas mendocina (strain ymp) (Pseudomonas mendocina).